A 233-amino-acid polypeptide reads, in one-letter code: MPSNSPAPDAPLAVVLLSGGLDSMVCAGLAQEQGFRVLALTIDYNQRHRVELDAARAIAARLGVERHVILPLDLRQFGGSALTADIAVPKDGVGDDIPVTYVPARNLIFLSLALAWAEAAGSKDLFIGVNALDYSGYPDCRPEFVAGFEDLARIATKVGSEGGTVTVHAPLQHLKKSEIAREAARLGLEAGDSWSCYDPLPDGRACGVCDSCRLRRAGFEEAGLNDGTRYGGG.

An ATP-binding site is contributed by 17-27 (LSGGLDSMVCA). Positions 196, 206, 209, and 212 each coordinate Zn(2+).

Belongs to the QueC family. It depends on Zn(2+) as a cofactor.

The enzyme catalyses 7-carboxy-7-deazaguanine + NH4(+) + ATP = 7-cyano-7-deazaguanine + ADP + phosphate + H2O + H(+). It functions in the pathway purine metabolism; 7-cyano-7-deazaguanine biosynthesis. Its function is as follows. Catalyzes the ATP-dependent conversion of 7-carboxy-7-deazaguanine (CDG) to 7-cyano-7-deazaguanine (preQ(0)). This is 7-cyano-7-deazaguanine synthase from Novosphingobium aromaticivorans (strain ATCC 700278 / DSM 12444 / CCUG 56034 / CIP 105152 / NBRC 16084 / F199).